A 241-amino-acid chain; its full sequence is Small ribosomal subunit protein bS6 (241 aa).

Basic residues predominate over residues 97-108; the sequence is KPKIRERNRKYT. A disordered region spans residues 97-241; that stretch reads KPKIRERNRK…YNNKKPQSSN (145 aa). The segment covering 109 to 118 has biased composition (basic and acidic residues); the sequence is PRRDRFEKPN. 2 stretches are compositionally biased toward low complexity: residues 130–151 and 161–182; these read QDQQ…QTSQ and DDFQ…NQSG. Residues 189-202 show a composition bias toward polar residues; sequence RQNQENIHQNSKNH.

This sequence belongs to the bacterial ribosomal protein bS6 family.

Its function is as follows. Binds together with bS18 to 16S ribosomal RNA. This is Small ribosomal subunit protein bS6 from Mesomycoplasma hyopneumoniae (strain 232) (Mycoplasma hyopneumoniae).